The following is a 308-amino-acid chain: Acetylglutamate kinase (308 aa).

Residues 86–87 (GG), R108, and N201 contribute to the substrate site.

This sequence belongs to the acetylglutamate kinase family. ArgB subfamily.

The protein localises to the cytoplasm. It catalyses the reaction N-acetyl-L-glutamate + ATP = N-acetyl-L-glutamyl 5-phosphate + ADP. Its pathway is amino-acid biosynthesis; L-arginine biosynthesis; N(2)-acetyl-L-ornithine from L-glutamate: step 2/4. Its function is as follows. Catalyzes the ATP-dependent phosphorylation of N-acetyl-L-glutamate. This is Acetylglutamate kinase from Prochlorococcus marinus (strain MIT 9303).